A 137-amino-acid polypeptide reads, in one-letter code: Peptide methionine sulfoxide reductase MsrB (137 aa).

Residues 7–129 (AEELKKNLSE…NSASLRFTDG (123 aa)) form the MsrB domain. Residues Cys46, Cys49, Cys95, and Cys98 each contribute to the Zn(2+) site. Cys118 acts as the Nucleophile in catalysis.

Belongs to the MsrB Met sulfoxide reductase family. Requires Zn(2+) as cofactor.

It catalyses the reaction L-methionyl-[protein] + [thioredoxin]-disulfide + H2O = L-methionyl-(R)-S-oxide-[protein] + [thioredoxin]-dithiol. This Escherichia coli O8 (strain IAI1) protein is Peptide methionine sulfoxide reductase MsrB.